The chain runs to 358 residues: Protein RecA (358 aa).

66–73 (GPESSGKT) contacts ATP.

Belongs to the RecA family.

The protein localises to the cytoplasm. Can catalyze the hydrolysis of ATP in the presence of single-stranded DNA, the ATP-dependent uptake of single-stranded DNA by duplex DNA, and the ATP-dependent hybridization of homologous single-stranded DNAs. It interacts with LexA causing its activation and leading to its autocatalytic cleavage. The sequence is that of Protein RecA from Herpetosiphon aurantiacus (strain ATCC 23779 / DSM 785 / 114-95).